Here is a 372-residue protein sequence, read N- to C-terminus: N-methyl-L-tryptophan oxidase (372 aa).

FAD is bound at residue 4–34 (DLIIIGSGSVGAAAGYYATRAGLKVLMTDAH). Residue C307 is modified to S-8alpha-FAD cysteine.

The protein belongs to the MSOX/MTOX family. MTOX subfamily. Monomer. FAD is required as a cofactor.

It catalyses the reaction N(alpha)-methyl-L-tryptophan + O2 + H2O = L-tryptophan + formaldehyde + H2O2. Its function is as follows. Catalyzes the oxidative demethylation of N-methyl-L-tryptophan. The polypeptide is N-methyl-L-tryptophan oxidase (Salmonella newport (strain SL254)).